A 109-amino-acid polypeptide reads, in one-letter code: MRMILMFDMPTDTAEERKAYRKFRKFLLSEGFIMHQFSVYSKLLLNNSANTAMIARLKENNPKKGNITLLTVTEKQFARMIYLNGERDTSIANSDSRLVFLGEAFPDET.

Asp8 serves as a coordination point for Mg(2+).

The protein belongs to the CRISPR-associated endoribonuclease Cas2 protein family. Homodimer, forms a heterotetramer with a Cas1 homodimer. Requires Mg(2+) as cofactor.

CRISPR (clustered regularly interspaced short palindromic repeat), is an adaptive immune system that provides protection against mobile genetic elements (viruses, transposable elements and conjugative plasmids). CRISPR clusters contain sequences complementary to antecedent mobile elements and target invading nucleic acids. CRISPR clusters are transcribed and processed into CRISPR RNA (crRNA). Functions as a ssRNA-specific endoribonuclease. Involved in the integration of spacer DNA into the CRISPR cassette. The protein is CRISPR-associated endoribonuclease Cas2 of Streptococcus mutans serotype c (strain ATCC 700610 / UA159).